Reading from the N-terminus, the 847-residue chain is Lethal(3)malignant brain tumor-like protein 1 (847 aa).

Composition is skewed to basic and acidic residues over residues 65–82 and 144–155; these read FPREPPRNTGAERPEKGV and AVKEGHAKKDGD. 3 disordered regions span residues 65 to 87, 142 to 163, and 237 to 296; these read FPREPPRNTGAERPEKGVGSEPI, AEAVKEGHAKKDGDSDVAPTSR, and VKKR…SEEK. 3 MBT repeats span residues 300–400, 408–507, and 516–611; these read WSWA…LQPP, FSWT…LTPP, and FIWE…LQPP. The segment at 473–480 is interaction with monomethylated and dimethylated peptides; sequence FDNWDDTY. The segment at 639-682 adopts a CCHHC-type zinc-finger fold; that stretch reads SKYSFHHRKCPTPGCDGSGHVTGRFTAHYCLSGCPLAEKNQGKL. Positions 648, 653, 666, and 672 each coordinate Zn(2+). One can recognise an SAM domain in the interval 778–842; that stretch reads WTIDEVFSFV…YNAILMFKNA (65 aa).

Homodimer.

Its subcellular location is the nucleus. Its function is as follows. Polycomb group (PcG) protein that specifically recognizes and binds mono- and dimethyllysine residues on target proteins, thereby acting as a 'reader' of a network of post-translational modifications. PcG proteins maintain the transcriptionally repressive state of genes: acts as a chromatin compaction factor by recognizing and binding mono- and dimethylated histone H1b/H1-4 at 'Lys-26' (H1bK26me1 and H1bK26me2) and histone H4 at 'Lys-20' (H4K20me1 and H4K20me2), leading to condense chromatin and repress transcription. The protein is Lethal(3)malignant brain tumor-like protein 1 (L3MBTL1) of Gallus gallus (Chicken).